The chain runs to 154 residues: Transcriptional repressor NrdR (154 aa).

The segment at 3-34 (CPFCGANDTKVIDSRLVAEGEQVRRRRECVAC) is a zinc-finger region. The ATP-cone domain maps to 49 to 139 (PRLIKQDGTR…VYRRFQDLDE (91 aa)).

The protein belongs to the NrdR family. Zn(2+) serves as cofactor.

Functionally, negatively regulates transcription of bacterial ribonucleotide reductase nrd genes and operons by binding to NrdR-boxes. The sequence is that of Transcriptional repressor NrdR from Pseudomonas entomophila (strain L48).